Reading from the N-terminus, the 203-residue chain is Thymidylate kinase (203 aa).

Position 10-17 (G10–S17) interacts with ATP.

The protein belongs to the thymidylate kinase family.

It carries out the reaction dTMP + ATP = dTDP + ADP. Functionally, phosphorylation of dTMP to form dTDP in both de novo and salvage pathways of dTTP synthesis. The polypeptide is Thymidylate kinase (Cupriavidus taiwanensis (strain DSM 17343 / BCRC 17206 / CCUG 44338 / CIP 107171 / LMG 19424 / R1) (Ralstonia taiwanensis (strain LMG 19424))).